The following is a 320-amino-acid chain: ATP-dependent 6-phosphofructokinase (320 aa).

Residue G11 participates in ATP binding. R21–K25 provides a ligand contact to ADP. Residues R72–F73 and G102–S105 contribute to the ATP site. Position 103 (D103) interacts with Mg(2+). T125–D127 contributes to the substrate binding site. Catalysis depends on D127, which acts as the Proton acceptor. R154 is an ADP binding site. Substrate-binding positions include R162 and M169–R171. Residues G185 to D187 and K213 to H215 contribute to the ADP site. Substrate is bound by residues E222, R243, and H249 to R252.

The protein belongs to the phosphofructokinase type A (PFKA) family. ATP-dependent PFK group I subfamily. Prokaryotic clade 'B1' sub-subfamily. Homotetramer. Requires Mg(2+) as cofactor.

Its subcellular location is the cytoplasm. It carries out the reaction beta-D-fructose 6-phosphate + ATP = beta-D-fructose 1,6-bisphosphate + ADP + H(+). It functions in the pathway carbohydrate degradation; glycolysis; D-glyceraldehyde 3-phosphate and glycerone phosphate from D-glucose: step 3/4. Allosterically activated by ADP and other diphosphonucleosides, and allosterically inhibited by phosphoenolpyruvate. In terms of biological role, catalyzes the phosphorylation of D-fructose 6-phosphate to fructose 1,6-bisphosphate by ATP, the first committing step of glycolysis. The chain is ATP-dependent 6-phosphofructokinase from Lactobacillus helveticus (strain DPC 4571).